The primary structure comprises 276 residues: NH(3)-dependent NAD(+) synthetase (276 aa).

43–50 (GISGGVDS) contacts ATP. A Mg(2+)-binding site is contributed by D49. R146 contributes to the deamido-NAD(+) binding site. ATP is bound at residue T166. E171 contacts Mg(2+). The deamido-NAD(+) site is built by K179 and D186. ATP contacts are provided by K195 and T217. Residue 266 to 267 (HK) coordinates deamido-NAD(+).

It belongs to the NAD synthetase family. In terms of assembly, homodimer.

It catalyses the reaction deamido-NAD(+) + NH4(+) + ATP = AMP + diphosphate + NAD(+) + H(+). Its pathway is cofactor biosynthesis; NAD(+) biosynthesis; NAD(+) from deamido-NAD(+) (ammonia route): step 1/1. Its function is as follows. Catalyzes the ATP-dependent amidation of deamido-NAD to form NAD. Uses ammonia as a nitrogen source. The chain is NH(3)-dependent NAD(+) synthetase from Vibrio campbellii (strain ATCC BAA-1116).